The following is a 459-amino-acid chain: Heat stress transcription factor A-4d (459 aa).

Residues 127–189 (AESERRELEE…QKNIVASLCE (63 aa)) adopt a coiled-coil conformation. Residues 141-191 (LKYEKSILVADLQRQNQQQYVINWQMQAMEGRLVAMEQRQKNIVASLCEML) are hydrophobic repeat HR-A/B. A Nuclear localization signal motif is present at residues 209-213 (SKKRR). Over residues 364 to 388 (YPTQADVNSEIASSTDTSQDGTSET) the composition is skewed to polar residues. The tract at residues 364-398 (YPTQADVNSEIASSTDTSQDGTSETEASHGPTNDV) is disordered. The AHA motif lies at 397-406 (DVFWERFLTE).

Belongs to the HSF family. Class A subfamily. In terms of assembly, homotrimer. In terms of processing, exhibits temperature-dependent phosphorylation.

The protein localises to the nucleus. Functionally, transcriptional regulator that specifically binds DNA of heat shock promoter elements (HSE). The chain is Heat stress transcription factor A-4d (HSFA4D) from Oryza sativa subsp. japonica (Rice).